The chain runs to 960 residues: Gamma-aminobutyric acid type B receptor subunit 1 (960 aa).

Positions M1–A19 are cleaved as a signal peptide. Residues Q20 to L590 are Extracellular-facing. N23 and N83 each carry an N-linked (GlcNAc...) asparagine glycan. 2 consecutive Sushi domains span residues C29–C95 and R97–V158. Disulfide bonds link C99–C144, C130–C156, and C219–C245. 4-aminobutanoate-binding residues include S246, S269, H286, and Y366. A disulfide bridge connects residues C375 and C409. 2 N-linked (GlcNAc...) asparagine glycosylation sites follow: N408 and N439. E465 provides a ligand contact to 4-aminobutanoate. N481, N501, and N513 each carry an N-linked (GlcNAc...) asparagine glycan. Residues F591–F611 traverse the membrane as a helical segment. The Cytoplasmic segment spans residues N612–N630. A helical transmembrane segment spans residues L631–Y651. The Extracellular segment spans residues H652–L666. A helical transmembrane segment spans residues W667 to V687. Over H688–L709 the chain is Cytoplasmic. The helical transmembrane segment at Y710 to V730 threads the bilayer. Residues D731–T767 are Extracellular-facing. The helical transmembrane segment at W768 to Y788 threads the bilayer. Residues E789–A803 lie on the Cytoplasmic side of the membrane. A helical transmembrane segment spans residues V804–I824. Over L825–A832 the chain is Extracellular. A helical membrane pass occupies residues F833–V853. At P854–K960 the chain is on the cytoplasmic side. Disordered stretches follow at residues Q866–E891 and V908–K960. A compositionally biased stretch (polar residues) spans S867–T879. A coiled-coil region spans residues E868–R924. T872 carries the phosphothreonine modification. Residues S887–L915 are interaction with ATF4. Phosphothreonine is present on T929.

It belongs to the G-protein coupled receptor 3 family. GABA-B receptor subfamily. In terms of assembly, heterodimer of GABBR1 and GABBR2. Homodimers may form, but are inactive. Interacts (via C-terminus) with ATF4 (via leucine zipper domain). Interacts with JAKMIP1. Interacts with KCTD8, KCTD12, KCTD12B and KCTD16; this interaction determines the pharmacology and kinetics of the receptor response, the KCTD proteins markedly accelerating the GABA-B response, although to different extents. Expressed in neuronal tissue including cortex, cerebellum and spinal cord. Not detected in non-neuronal tissues including heart, liver, spleen and kidney.

The protein resides in the cell membrane. It is found in the postsynaptic cell membrane. It localises to the cell projection. The protein localises to the dendrite. Its function is as follows. Component of a heterodimeric G-protein coupled receptor for GABA, formed by GABBR1 and GABBR2. Within the heterodimeric GABA receptor, only GABBR1 seems to bind agonists, while GABBR2 mediates coupling to G proteins. Ligand binding causes a conformation change that triggers signaling via guanine nucleotide-binding proteins (G proteins) and modulates the activity of down-stream effectors, such as adenylate cyclase. Signaling inhibits adenylate cyclase, stimulates phospholipase A2, activates potassium channels, inactivates voltage-dependent calcium-channels and modulates inositol phospholipid hydrolysis. Calcium is required for high affinity binding to GABA. Plays a critical role in the fine-tuning of inhibitory synaptic transmission. Pre-synaptic GABA receptor inhibits neurotransmitter release by down-regulating high-voltage activated calcium channels, whereas postsynaptic GABA receptor decreases neuronal excitability by activating a prominent inwardly rectifying potassium (Kir) conductance that underlies the late inhibitory postsynaptic potentials. Not only implicated in synaptic inhibition but also in hippocampal long-term potentiation, slow wave sleep, muscle relaxation and antinociception. The protein is Gamma-aminobutyric acid type B receptor subunit 1 (Gabbr1) of Mus musculus (Mouse).